A 437-amino-acid chain; its full sequence is tRNA-2-methylthio-N(6)-dimethylallyladenosine synthase (437 aa).

Positions 1–115 (MKVYIETMGC…ISQVIHKEKA (115 aa)) constitute an MTTase N-terminal domain. [4Fe-4S] cluster contacts are provided by cysteine 10, cysteine 46, cysteine 78, cysteine 148, cysteine 152, and cysteine 155. The 234-residue stretch at 134–367 (KKAQIRSLLN…QNRHKEILEE (234 aa)) folds into the Radical SAM core domain. Residues 370 to 436 (KLEVGKTHVV…KGRLMATTKG (67 aa)) form the TRAM domain.

This sequence belongs to the methylthiotransferase family. MiaB subfamily. In terms of assembly, monomer. Requires [4Fe-4S] cluster as cofactor.

Its subcellular location is the cytoplasm. It catalyses the reaction N(6)-dimethylallyladenosine(37) in tRNA + (sulfur carrier)-SH + AH2 + 2 S-adenosyl-L-methionine = 2-methylsulfanyl-N(6)-dimethylallyladenosine(37) in tRNA + (sulfur carrier)-H + 5'-deoxyadenosine + L-methionine + A + S-adenosyl-L-homocysteine + 2 H(+). Its function is as follows. Catalyzes the methylthiolation of N6-(dimethylallyl)adenosine (i(6)A), leading to the formation of 2-methylthio-N6-(dimethylallyl)adenosine (ms(2)i(6)A) at position 37 in tRNAs that read codons beginning with uridine. The sequence is that of tRNA-2-methylthio-N(6)-dimethylallyladenosine synthase from Helicobacter pylori (strain J99 / ATCC 700824) (Campylobacter pylori J99).